We begin with the raw amino-acid sequence, 189 residues long: Fucolectin-5 (189 aa).

Residues 1–31 (MKTCNLTDRMKVKMIMLLFQILAISTLQSDS) form the signal peptide. Positions 40 to 189 (QENVAVRGKA…VEVNALLPAN (150 aa)) are F5/8 type C-like. Ca(2+)-binding residues include D70, N72, and S81. Intrachain disulfides connect C82-C178, C114-C115, and C140-C156. The alpha-L-fucose site is built by H84 and R111. The Cell attachment site motif lies at 111–113 (RGD). R118 contributes to the alpha-L-fucose binding site. 2 residues coordinate Ca(2+): C178 and E179.

The protein belongs to the fucolectin family. As to quaternary structure, homotrimer. As to expression, gill mucous cells.

Its subcellular location is the secreted. Acts as a defensive agent. Recognizes blood group fucosylated oligosaccharides including A, B, H and Lewis B-type antigens. Does not recognize Lewis A antigen and has low affinity for monovalent haptens. The chain is Fucolectin-5 from Anguilla japonica (Japanese eel).